The chain runs to 256 residues: Ribosomal RNA small subunit methyltransferase A (256 aa).

The S-adenosyl-L-methionine site is built by Asn12, Leu14, Gly39, Glu60, Asp85, and Asn103.

Belongs to the class I-like SAM-binding methyltransferase superfamily. rRNA adenine N(6)-methyltransferase family. RsmA subfamily.

It is found in the cytoplasm. The enzyme catalyses adenosine(1518)/adenosine(1519) in 16S rRNA + 4 S-adenosyl-L-methionine = N(6)-dimethyladenosine(1518)/N(6)-dimethyladenosine(1519) in 16S rRNA + 4 S-adenosyl-L-homocysteine + 4 H(+). Its function is as follows. Specifically dimethylates two adjacent adenosines (A1518 and A1519) in the loop of a conserved hairpin near the 3'-end of 16S rRNA in the 30S particle. May play a critical role in biogenesis of 30S subunits. This chain is Ribosomal RNA small subunit methyltransferase A, found in Legionella pneumophila (strain Corby).